A 101-amino-acid polypeptide reads, in one-letter code: NADH-quinone oxidoreductase subunit K (101 aa).

The next 3 membrane-spanning stretches (helical) occupy residues 4–24 (LSHY…GIFI), 29–49 (IIVI…NLVA), and 65–85 (FVLT…VVFF).

This sequence belongs to the complex I subunit 4L family. In terms of assembly, NDH-1 is composed of 14 different subunits. Subunits NuoA, H, J, K, L, M, N constitute the membrane sector of the complex.

It is found in the cell inner membrane. It carries out the reaction a quinone + NADH + 5 H(+)(in) = a quinol + NAD(+) + 4 H(+)(out). NDH-1 shuttles electrons from NADH, via FMN and iron-sulfur (Fe-S) centers, to quinones in the respiratory chain. The immediate electron acceptor for the enzyme in this species is believed to be ubiquinone. Couples the redox reaction to proton translocation (for every two electrons transferred, four hydrogen ions are translocated across the cytoplasmic membrane), and thus conserves the redox energy in a proton gradient. This Methylobacterium nodulans (strain LMG 21967 / CNCM I-2342 / ORS 2060) protein is NADH-quinone oxidoreductase subunit K.